Consider the following 234-residue polypeptide: 2,3,4,5-tetrahydropyridine-2,6-dicarboxylate N-acetyltransferase (234 aa).

Belongs to the transferase hexapeptide repeat family. DapH subfamily.

The catalysed reaction is (S)-2,3,4,5-tetrahydrodipicolinate + acetyl-CoA + H2O = L-2-acetamido-6-oxoheptanedioate + CoA. The protein operates within amino-acid biosynthesis; L-lysine biosynthesis via DAP pathway; LL-2,6-diaminopimelate from (S)-tetrahydrodipicolinate (acetylase route): step 1/3. Catalyzes the transfer of an acetyl group from acetyl-CoA to tetrahydrodipicolinate. The protein is 2,3,4,5-tetrahydropyridine-2,6-dicarboxylate N-acetyltransferase of Leuconostoc citreum (strain KM20).